We begin with the raw amino-acid sequence, 205 residues long: DNA-directed RNA polymerase RPB5 homolog (205 aa).

Belongs to the archaeal RpoH/eukaryotic RPB5 RNA polymerase subunit family. In terms of assembly, part of the viral DNA-directed RNA polymerase that consists of 8 polII-like subunits (RPB1, RPB2, RPB3, RPB5, RPB6, RPB7, RPB9, RPB10), a capping enzyme and a termination factor.

It is found in the host cytoplasm. Its subcellular location is the virion. Component of the DNA-directed RNA polymerase (RNAP) that catalyzes the transcription in the cytoplasm of viral DNA into RNA using the four ribonucleoside triphosphates as substrates. The chain is DNA-directed RNA polymerase RPB5 homolog from Ornithodoros (relapsing fever ticks).